Reading from the N-terminus, the 1020-residue chain is Sodium/potassium-transporting ATPase subunit alpha-2 (1020 aa).

Positions 1–5 (MGRGA) are excised as a propeptide. Positions 1–31 (MGRGAGREYSPAATTAENGGGKKKQKEKELD) are disordered. The Cytoplasmic portion of the chain corresponds to 6-85 (GREYSPAATT…NALTPPPTTP (80 aa)). Serine 10 carries the phosphoserine modification. Positions 80 to 82 (PPP) are interaction with phosphoinositide-3 kinase. Residues 86 to 106 (EWVKFCRQLFGGFSILLWIGA) form a helical membrane-spanning segment. Over 107-129 (ILCFLAYGIQAAMEDEPSNDNLY) the chain is Extracellular. The chain crosses the membrane as a helical span at residues 130–150 (LGVVLAAVVIVTGCFSYYQEA). The Cytoplasmic portion of the chain corresponds to 151–286 (KSSKIMDSFK…VGRTPIAMEI (136 aa)). Residues 212–227 (DNSSLTGESEPQTRSP) are compositionally biased toward polar residues. The disordered stretch occupies residues 212-231 (DNSSLTGESEPQTRSPEFTH). A helical transmembrane segment spans residues 287–306 (EHFIQLITGVAVFLGVSFFV). Topologically, residues 307-318 (LSLILGYSWLEA) are extracellular. The chain crosses the membrane as a helical span at residues 319 to 336 (VIFLIGIIVANVPEGLLA). Topologically, residues 337–769 (TVTVCLTLTA…EEGRLIFDNL (433 aa)) are cytoplasmic. Catalysis depends on aspartate 374, which acts as the 4-aspartylphosphate intermediate. A phosphoserine mark is found at serine 439, serine 450, and serine 559. Threonine 570 is subject to Phosphothreonine. A phosphoserine mark is found at serine 587 and serine 672. Mg(2+)-binding residues include aspartate 714 and aspartate 718. A helical membrane pass occupies residues 770 to 789 (KKSIAYTLTSNIPEITPFLL). At 790–799 (FIIANIPLPL) the chain is on the extracellular side. The helical transmembrane segment at 800–820 (GTVTILCIDLGTDMVPAISLA) threads the bilayer. Over 821 to 840 (YEAAESDIMKRQPRNPQTDK) the chain is Cytoplasmic. Serine 826 bears the Phosphoserine mark. Residues 841–863 (LVNERLISMAYGQIGMIQALGGF) form a helical membrane-spanning segment. At 864-915 (FTYFVILAENGFLPSRLLGIRLDWDDRSMNDLEDSYGQEWTYEQRKVVEFTC) the chain is on the extracellular side. Residues 916 to 935 (HTAFFASIVVVQWADLIICK) traverse the membrane as a helical segment. At 936–948 (TRRNSVFQQGMKN) the chain is on the cytoplasmic side. A Phosphoserine; by PKA modification is found at serine 940. A helical transmembrane segment spans residues 949 to 967 (KILIFGLLEETALAAFLSY). The Extracellular portion of the chain corresponds to 968–982 (CPGMGVALRMYPLKV). A helical transmembrane segment spans residues 983–1003 (TWWFCAFPYSLLIFIYDEVRK). Residues 1004-1020 (LILRRYPGGWVEKETYY) lie on the Cytoplasmic side of the membrane.

The protein belongs to the cation transport ATPase (P-type) (TC 3.A.3) family. Type IIC subfamily. As to quaternary structure, the sodium/potassium-transporting ATPase is composed of a catalytic alpha subunit, an auxiliary non-catalytic beta subunit and an additional regulatory subunit. Interacts with regulatory subunit FXYD1.

The protein resides in the membrane. It is found in the cell membrane. It catalyses the reaction K(+)(out) + Na(+)(in) + ATP + H2O = K(+)(in) + Na(+)(out) + ADP + phosphate + H(+). This is the catalytic component of the active enzyme, which catalyzes the hydrolysis of ATP coupled with the exchange of sodium and potassium ions across the plasma membrane. This action creates the electrochemical gradient of sodium and potassium, providing the energy for active transport of various nutrients. The protein is Sodium/potassium-transporting ATPase subunit alpha-2 (ATP1A2) of Sus scrofa (Pig).